Reading from the N-terminus, the 908-residue chain is 5'-3' exoribonuclease 2 homolog (908 aa).

The segment at 263 to 280 (RPCDICNGFGHEMDKCVG) adopts a CCHC-type zinc-finger fold. Disordered stretches follow at residues 409 to 457 (RQRR…VGNY) and 821 to 908 (GGNQ…YRRF). Residues 432–454 (HGSLNQSAFGASAVGPNSQQRSV) are compositionally biased toward polar residues. S438 is subject to Phosphoserine. Low complexity-rich tracts occupy residues 825–868 (GQSY…HNQR) and 878–908 (QRNF…YRRF).

This sequence belongs to the 5'-3' exonuclease family. XRN2/RAT1 subfamily. Interacts with cuff and Rai1; the interaction with cuff may inhibit its role in RNA degradation.

It is found in the nucleus. Functionally, a 5'-3' exoribonuclease. May promote the termination of transcription by RNA polymerase II and promote RNA degradation. Involved in turnover of piRNA precursors. The protein is 5'-3' exoribonuclease 2 homolog of Drosophila melanogaster (Fruit fly).